The following is a 225-amino-acid chain: Ribonuclease 3 (225 aa).

Residues leucine 5–aspartate 127 form the RNase III domain. Glutamate 40 provides a ligand contact to Mg(2+). The active site involves aspartate 44. 2 residues coordinate Mg(2+): aspartate 113 and glutamate 116. Glutamate 116 is an active-site residue. The region spanning aspartate 154–methionine 224 is the DRBM domain.

It belongs to the ribonuclease III family. As to quaternary structure, homodimer. Mg(2+) is required as a cofactor.

It is found in the cytoplasm. The enzyme catalyses Endonucleolytic cleavage to 5'-phosphomonoester.. In terms of biological role, digests double-stranded RNA. Involved in the processing of primary rRNA transcript to yield the immediate precursors to the large and small rRNAs (23S and 16S). Also processes some mRNAs, and tRNAs when they are encoded in the rRNA operon. Its function is as follows. CRISPR (clustered regularly interspaced short palindromic repeat) is an adaptive immune system that provides protection against mobile genetic elements (viruses, transposable elements and conjugative plasmids). CRISPR clusters contain spacers, sequences complementary to antecedent mobile elements, and target invading nucleic acids. CRISPR clusters are transcribed and processed into CRISPR RNA (crRNA). In this organism endogenous ribonuclease 3 and Cas9 are required for correct coprocessing of pre-crRNA and the trans-encoded small RNA (tracrRNA). Cas9, crRNA and tracrRNA are required for cleavage of invading DNA. Complements pre-crRNA and tracrRNA coprocessing defects in an rnc deletion in S.pyogenes strain 370. This chain is Ribonuclease 3, found in Pasteurella multocida (strain Pm70).